The primary structure comprises 782 residues: MERSDSRDLYNFVRASSLDKNSTLFDASQYEFFGQNLDDMELGGLDDDGVIAPVLGHADDDEYHLFDKGEGAGLGSLSDMDDLATTFAKLNRVVTGPKHPGVIGDRGSGSFSRESSSATDWTQDAELTSWLDEQDQEAKRWSSQPQSFAHSKPLYRTSSYPQQQPQLQHYNSEPIILPESNFTSFPPPGNRSPQASPGNLHRAPSLPGGSQLTYSAPSPLSNSGFHLSGLSQGPHYGGNLTRYASCGPTLGNMVQPHWVTDPGHLHGDHSGLLHNLVQQQHQQLPPRNAIMSQHLLALQQRQSYAQLAALQSQLYSSYPSPSRKVPFGVGEVREHKHKSSHRSRKNRGLSQQTSDAASQKSETGLQFRSKHMTSEEIESILKMQHSNSHSNDPYVNDYYHQAKLAKKSAGSKAISHFYPAQLKDHQPRSRNSSEQHPQVHVDALGKITLPSVRRPHALLEVDSSPGFNDGSGDHKGSGKHLEQEPLVAARVTIEDALGVLIDIVDIDRTLQNTRPQDGGAQLKRKRQILLEGLATALQLADPFSKTGQKSGMTAKDDIVFLRIATLPKGRKLLTKYLQLLVPGTENARVVCMAIFRHLRFLFGGLPSDTLAAETISNLAKAVTVCVQAMDLRALSACLAAVVCSSEQPPLRPIGSSAGDGASVVLISLLERAAEVVVVPRVMHGNSNDGLWRASFDEFFNLLTKYCRSKYDTIRGQNQGSAADVLELAIKREMPAELLRASLRHTNDDQRNYLLNFGRKPSAISESASHARGGQINSESVRG.

4 disordered regions span residues 96–153, 177–217, 332–372, and 460–481; these read GPKH…HSKP, LPES…YSAP, VREH…SKHM, and EVDS…GKHL. The span at 108-117 shows a compositional bias: low complexity; the sequence is SGSFSRESSS. Positions 208–217 are enriched in polar residues; that stretch reads GGSQLTYSAP. Basic residues predominate over residues 335–347; it reads HKHKSSHRSRKNR. Over residues 348 to 366 the composition is skewed to polar residues; that stretch reads GLSQQTSDAASQKSETGLQ. Positions 471–481 are enriched in basic and acidic residues; the sequence is SGDHKGSGKHL.

As to quaternary structure, interacts with AFPH2/NINJA. Expressed in root vasculature, shoot apical meristem (SAM) and leaves.

Its function is as follows. Activator of mRNA decapping. Involved in mRNA decay via decapping. Involved in the regulation of root stem cell niche identity. Maintains root stem cell niche stability through the interaction with the negative regulator of jasmonate signaling AFPH2/NINJA, and the regulation of cell division. The protein is Protein PAT1 homolog 1 of Arabidopsis thaliana (Mouse-ear cress).